Reading from the N-terminus, the 680-residue chain is Putative cyclin-dependent serine/threonine-protein kinase DDB_G0272797/DDB_G0274007 (680 aa).

In terms of domain architecture, Protein kinase spans 4–381 (YIILSKCGQG…SLEALEHPWF (378 aa)). ATP is bound by residues 10–18 (CGQGTYGSV) and lysine 33. The Proton acceptor role is filled by aspartate 125. Disordered regions lie at residues 243–299 (QQQQ…LQSP), 409–444 (RQLQQQQHHHQQQQQQQQQQQQQQQPHQQQLIQRQH), 483–507 (LAQHQQYNSQQHQQHHQQQHQQHQQ), and 597–680 (QQQQ…KSNG). The span at 257 to 286 (NNNNNNNNNNNNNNNNNNNNNNNNNNNNNN) shows a compositional bias: low complexity. Residues 287–297 (KYNNISTSCLQ) show a composition bias toward polar residues. 3 stretches are compositionally biased toward low complexity: residues 410-444 (QLQQQQHHHQQQQQQQQQQQQQQQPHQQQLIQRQH), 483-494 (LAQHQQYNSQQH), and 597-616 (QQQQHQYQPPQQYNHQPPQH). The segment covering 617–631 (QHQHQHQHQHQHQHQ) has biased composition (basic residues). The segment covering 632–642 (HQPQPQHQHQP) has biased composition (low complexity). The segment covering 643–655 (QPQPQPTPTPTPT) has biased composition (pro residues). The span at 656–680 (STPTTTTIPPTITTTIQPTISKSNG) shows a compositional bias: low complexity.

Belongs to the protein kinase superfamily. CMGC Ser/Thr protein kinase family. CDC2/CDKX subfamily.

The enzyme catalyses L-seryl-[protein] + ATP = O-phospho-L-seryl-[protein] + ADP + H(+). The catalysed reaction is L-threonyl-[protein] + ATP = O-phospho-L-threonyl-[protein] + ADP + H(+). The protein is Putative cyclin-dependent serine/threonine-protein kinase DDB_G0272797/DDB_G0274007 of Dictyostelium discoideum (Social amoeba).